A 263-amino-acid chain; its full sequence is Mediator of RNA polymerase II transcription subunit 7 (263 aa).

Residues 1 to 10 show a composition bias toward polar residues; the sequence is MADAAQQRTL. Disordered regions lie at residues 1-57, 101-122, and 222-247; these read MADA…PAEL, ITQL…SEPS, and GIAA…QKTI. Basic and acidic residues predominate over residues 24-47; sequence FTPDNLKRLEEIKKEASKGEDGKP. Polar residues predominate over residues 101–111; sequence ITQLYPSSSPA. Basic and acidic residues predominate over residues 234-247; sequence EDGRKESETSQKTI.

It belongs to the Mediator complex subunit 7 family. As to quaternary structure, component of the Mediator complex.

It is found in the nucleus. In terms of biological role, component of the Mediator complex, a coactivator involved in the regulated transcription of nearly all RNA polymerase II-dependent genes. Mediator functions as a bridge to convey information from gene-specific regulatory proteins to the basal RNA polymerase II transcription machinery. Mediator is recruited to promoters by direct interactions with regulatory proteins and serves as a scaffold for the assembly of a functional preinitiation complex with RNA polymerase II and the general transcription factors. The polypeptide is Mediator of RNA polymerase II transcription subunit 7 (med7) (Aspergillus niger (strain ATCC MYA-4892 / CBS 513.88 / FGSC A1513)).